A 1028-amino-acid polypeptide reads, in one-letter code: Beta-galactosidase (1028 aa).

Positions 104 and 203 each coordinate substrate. Aspartate 203 is a binding site for Na(+). Positions 418, 420, and 463 each coordinate Mg(2+). Substrate contacts are provided by residues glutamate 463 and 539–542 (EYAH). The active-site Proton donor is the glutamate 463. The active-site Nucleophile is glutamate 539. Asparagine 599 is a Mg(2+) binding site. Residues phenylalanine 603 and asparagine 606 each contribute to the Na(+) site. The substrate site is built by asparagine 606 and tryptophan 1003.

The protein belongs to the glycosyl hydrolase 2 family. As to quaternary structure, homotetramer. It depends on Mg(2+) as a cofactor. Na(+) serves as cofactor.

The catalysed reaction is Hydrolysis of terminal non-reducing beta-D-galactose residues in beta-D-galactosides.. This chain is Beta-galactosidase, found in Enterobacter cloacae.